A 2282-amino-acid polypeptide reads, in one-letter code: Protein Ycf2 (2282 aa).

Residue 1637–1644 coordinates ATP; the sequence is GSIGTGRS.

It belongs to the Ycf2 family.

It localises to the plastid. Its subcellular location is the chloroplast stroma. In terms of biological role, probable ATPase of unknown function. Its presence in a non-photosynthetic plant (Epifagus virginiana) and experiments in tobacco indicate that it has an essential function which is probably not related to photosynthesis. The polypeptide is Protein Ycf2 (Citrus sinensis (Sweet orange)).